The primary structure comprises 346 residues: Holliday junction branch migration complex subunit RuvB (346 aa).

Residues 1–182 (MSEPARLISP…FGIPVRLTFY (182 aa)) form a large ATPase domain (RuvB-L) region. ATP is bound by residues leucine 21, arginine 22, glycine 63, lysine 66, threonine 67, threonine 68, 129–131 (EDY), arginine 172, tyrosine 182, and arginine 219. Residue threonine 67 coordinates Mg(2+). Residues 183-253 (TVEELELIVR…IADEALTRLL (71 aa)) form a small ATPAse domain (RuvB-S) region. Residues 256–346 (NVGFDQLDKR…AQFRLFQEDD (91 aa)) are head domain (RuvB-H). The DNA site is built by arginine 292, arginine 311, and arginine 316.

Belongs to the RuvB family. In terms of assembly, homohexamer. Forms an RuvA(8)-RuvB(12)-Holliday junction (HJ) complex. HJ DNA is sandwiched between 2 RuvA tetramers; dsDNA enters through RuvA and exits via RuvB. An RuvB hexamer assembles on each DNA strand where it exits the tetramer. Each RuvB hexamer is contacted by two RuvA subunits (via domain III) on 2 adjacent RuvB subunits; this complex drives branch migration. In the full resolvosome a probable DNA-RuvA(4)-RuvB(12)-RuvC(2) complex forms which resolves the HJ.

The protein resides in the cytoplasm. The catalysed reaction is ATP + H2O = ADP + phosphate + H(+). Functionally, the RuvA-RuvB-RuvC complex processes Holliday junction (HJ) DNA during genetic recombination and DNA repair, while the RuvA-RuvB complex plays an important role in the rescue of blocked DNA replication forks via replication fork reversal (RFR). RuvA specifically binds to HJ cruciform DNA, conferring on it an open structure. The RuvB hexamer acts as an ATP-dependent pump, pulling dsDNA into and through the RuvAB complex. RuvB forms 2 homohexamers on either side of HJ DNA bound by 1 or 2 RuvA tetramers; 4 subunits per hexamer contact DNA at a time. Coordinated motions by a converter formed by DNA-disengaged RuvB subunits stimulates ATP hydrolysis and nucleotide exchange. Immobilization of the converter enables RuvB to convert the ATP-contained energy into a lever motion, pulling 2 nucleotides of DNA out of the RuvA tetramer per ATP hydrolyzed, thus driving DNA branch migration. The RuvB motors rotate together with the DNA substrate, which together with the progressing nucleotide cycle form the mechanistic basis for DNA recombination by continuous HJ branch migration. Branch migration allows RuvC to scan DNA until it finds its consensus sequence, where it cleaves and resolves cruciform DNA. The chain is Holliday junction branch migration complex subunit RuvB from Rhizobium etli (strain ATCC 51251 / DSM 11541 / JCM 21823 / NBRC 15573 / CFN 42).